The primary structure comprises 252 residues: Thiazole synthase (252 aa).

Lys-91 acts as the Schiff-base intermediate with DXP in catalysis. Residues Gly-152, 179–180, and 201–202 contribute to the 1-deoxy-D-xylulose 5-phosphate site; these read AG and NT.

This sequence belongs to the ThiG family. Homotetramer. Forms heterodimers with either ThiH or ThiS.

It is found in the cytoplasm. The catalysed reaction is [ThiS sulfur-carrier protein]-C-terminal-Gly-aminoethanethioate + 2-iminoacetate + 1-deoxy-D-xylulose 5-phosphate = [ThiS sulfur-carrier protein]-C-terminal Gly-Gly + 2-[(2R,5Z)-2-carboxy-4-methylthiazol-5(2H)-ylidene]ethyl phosphate + 2 H2O + H(+). The protein operates within cofactor biosynthesis; thiamine diphosphate biosynthesis. Its function is as follows. Catalyzes the rearrangement of 1-deoxy-D-xylulose 5-phosphate (DXP) to produce the thiazole phosphate moiety of thiamine. Sulfur is provided by the thiocarboxylate moiety of the carrier protein ThiS. In vitro, sulfur can be provided by H(2)S. This chain is Thiazole synthase, found in Erwinia amylovora (Fire blight bacteria).